Here is a 124-residue protein sequence, read N- to C-terminus: uncharacterized protein (124 aa).

Positions 1 to 18 (MHIIKTLISVGVAFSLSA) are cleaved as a signal peptide. The N-palmitoyl cysteine moiety is linked to residue Cys-19. Residue Cys-19 is the site of S-diacylglycerol cysteine attachment.

It is found in the cell membrane. This is an uncharacterized protein from Pasteurella multocida (strain Pm70).